Consider the following 420-residue polypeptide: MRYAMNKIPALLLVGALIIATVASGCIGGTTTTETPTVTKTKTQEVITLKVIGPWSGAELDAFMEVLKAFEKQHPNIKIEYKTYRAEDLSTILPLQFESHDTPADVIFMWGWFIAEMGKKGHLMELNNIINPEEYVPGILDSVTVDGKIYGAPFTAAAKPGFWYRKSFFEKHNLKPPKTWDDFVALLEEIKKIPGIKAPIVSGDSVGWPLSDVTEHFILTFGGKDLQLKLIKGEVKWEDPQVRKIFEEKLVPLLKAGYFSDPIEWTSAVDLWWKGEYALYFMGTWITGMVDDPNDLGLIPLPGVKAMVIAPDYLMVPKYTSHPKEALELAKFLATEGQRIHVGTKSGKLATWKKVSIDDYWAPMRDVAKIVANVESAPDLDDSVGGEWQKVFWDQLKLLWVQPDRLDEVLKTLDEKFPKK.

The first 25 residues, 1–25 (MRYAMNKIPALLLVGALIIATVASG), serve as a signal peptide directing secretion. Cys26 carries the post-translational modification N-acetylcysteine. The S-archaeol cysteine moiety is linked to residue Cys26.

This sequence belongs to the bacterial solute-binding protein 1 family.

The protein resides in the cell membrane. Functionally, probably part of a binding-protein-dependent transport system PH1036/38/39. This is an uncharacterized protein from Pyrococcus horikoshii (strain ATCC 700860 / DSM 12428 / JCM 9974 / NBRC 100139 / OT-3).